The sequence spans 319 residues: Formimidoylglutamase (319 aa).

The Mn(2+) site is built by His-131, Asp-154, His-156, Asp-158, Cys-248, and Asp-250.

The protein belongs to the arginase family. Mn(2+) is required as a cofactor.

The catalysed reaction is N-formimidoyl-L-glutamate + H2O = formamide + L-glutamate. It functions in the pathway amino-acid degradation; L-histidine degradation into L-glutamate; L-glutamate from N-formimidoyl-L-glutamate (hydrolase route): step 1/1. In terms of biological role, catalyzes the conversion of N-formimidoyl-L-glutamate to L-glutamate and formamide. The sequence is that of Formimidoylglutamase from Legionella pneumophila (strain Lens).